Here is a 226-residue protein sequence, read N- to C-terminus: Probable transaldolase (226 aa).

Residue lysine 91 is the Schiff-base intermediate with substrate of the active site.

The protein belongs to the transaldolase family. Type 3B subfamily.

It localises to the cytoplasm. The enzyme catalyses D-sedoheptulose 7-phosphate + D-glyceraldehyde 3-phosphate = D-erythrose 4-phosphate + beta-D-fructose 6-phosphate. The protein operates within carbohydrate degradation; pentose phosphate pathway; D-glyceraldehyde 3-phosphate and beta-D-fructose 6-phosphate from D-ribose 5-phosphate and D-xylulose 5-phosphate (non-oxidative stage): step 2/3. In terms of biological role, transaldolase is important for the balance of metabolites in the pentose-phosphate pathway. This is Probable transaldolase from Chlorobium phaeobacteroides (strain DSM 266 / SMG 266 / 2430).